The chain runs to 377 residues: Probable glucokinase 2 (377 aa).

Residue 27 to 32 participates in ATP binding; the sequence is CDVGGS.

The protein belongs to the bacterial glucokinase family.

The enzyme catalyses D-glucose + ATP = D-glucose 6-phosphate + ADP + H(+). The polypeptide is Probable glucokinase 2 (GK2) (Trichomonas vaginalis).